The sequence spans 509 residues: Dihydrolipoyl dehydrogenase, mitochondrial (509 aa).

The N-terminal 35 residues, 1 to 35 (MQSWSRVYCSLAKRGHFNRISHGLQGLSAVPLRTY), are a transit peptide targeting the mitochondrion. The residue at position 66 (lysine 66) is an N6-acetyllysine; alternate. Residue lysine 66 is modified to N6-succinyllysine; alternate. FAD is bound by residues 71 to 80 (EKNETLGGTC) and lysine 89. A disulfide bridge connects residues cysteine 80 and cysteine 85. N6-acetyllysine; alternate is present on residues lysine 104, lysine 122, lysine 132, and lysine 143. Residues lysine 104, lysine 122, lysine 132, and lysine 143 each carry the N6-succinyllysine; alternate modification. An FAD-binding site is contributed by glycine 154. N6-succinyllysine is present on residues lysine 159 and lysine 166. 183–185 (TGS) provides a ligand contact to FAD. NAD(+) is bound by residues 220-227 (GAGVIGVE) and glutamate 243. Lysine 273 and lysine 277 each carry N6-succinyllysine. Residue valine 278 coordinates NAD(+). Phosphoserine is present on residues serine 285 and serine 297. Residue glycine 314 participates in NAD(+) binding. Lysine 346 is modified (N6-acetyllysine). Residues aspartate 355 and 361–364 (MLAH) contribute to the FAD site. At lysine 410 the chain carries N6-acetyllysine; alternate. The residue at position 410 (lysine 410) is an N6-succinyllysine; alternate. 2 positions are modified to N6-acetyllysine: lysine 417 and lysine 420. The residue at position 430 (lysine 430) is an N6-succinyllysine. Histidine 487 (proton acceptor) is an active-site residue. Residue serine 502 is modified to Phosphoserine. At lysine 505 the chain carries N6-acetyllysine; alternate. At lysine 505 the chain carries N6-succinyllysine; alternate.

Belongs to the class-I pyridine nucleotide-disulfide oxidoreductase family. As to quaternary structure, homodimer. Part of the multimeric pyruvate dehydrogenase complex that contains multiple copies of pyruvate dehydrogenase (subunits PDHA (PDHA1 or PDHA2) and PDHB, E1), dihydrolipoamide acetyltransferase (DLAT, E2) and lipoamide dehydrogenase (DLD, E3). These subunits are bound to an inner core composed of about 48 DLAT and 12 PDHX molecules (by non covalent bonds). The 2-oxoglutarate dehydrogenase complex is composed of OGDH (2-oxoglutarate dehydrogenase; E1), DLST (dihydrolipoamide succinyltransferase; E2), DLD (dihydrolipoamide dehydrogenase; E3) and the assembly factor KGD4. It contains multiple copies of the three enzymatic components (E1, E2 and E3). In the nucleus, the 2-oxoglutarate dehydrogenase complex associates with KAT2A. Interacts with PDHX. It depends on FAD as a cofactor. In terms of processing, tyrosine phosphorylated.

Its subcellular location is the mitochondrion matrix. The protein resides in the nucleus. It localises to the cell projection. It is found in the cilium. The protein localises to the flagellum. Its subcellular location is the cytoplasmic vesicle. The protein resides in the secretory vesicle. It localises to the acrosome. It catalyses the reaction N(6)-[(R)-dihydrolipoyl]-L-lysyl-[protein] + NAD(+) = N(6)-[(R)-lipoyl]-L-lysyl-[protein] + NADH + H(+). Its activity is regulated as follows. Disruption of native heterodimer state inhibits primary dihydrolipoamide dehydrogenase activity and induces serine protease activity. Functionally, lipoamide dehydrogenase is a component of the glycine cleavage system as well as an E3 component of three alpha-ketoacid dehydrogenase complexes (pyruvate-, alpha-ketoglutarate-, and branched-chain amino acid-dehydrogenase complex). The 2-oxoglutarate dehydrogenase complex is mainly active in the mitochondrion. A fraction of the 2-oxoglutarate dehydrogenase complex also localizes in the nucleus and is required for lysine succinylation of histones: associates with KAT2A on chromatin and provides succinyl-CoA to histone succinyltransferase KAT2A. In monomeric form may have additional moonlighting function as serine protease. Involved in the hyperactivation of spermatazoa during capacitation and in the spermatazoal acrosome reaction. The polypeptide is Dihydrolipoyl dehydrogenase, mitochondrial (DLD) (Homo sapiens (Human)).